A 475-amino-acid polypeptide reads, in one-letter code: Transcription factor EB (475 aa).

Positions 1-52 (MASRIGLRMQLMREQAQQEEQRERMQQQAVMHYMQQQQQQQQQLGGPPTPAI) are disordered. Positions 1–166 (MASRIGLRMQ…DDVIDNIMRL (166 aa)) are interaction with ACSS2. The span at 26–43 (QQQAVMHYMQQQQQQQQQ) shows a compositional bias: low complexity. Residues serine 108, serine 113, serine 121, and serine 137 each carry the phosphoserine modification. Positions 135–152 (GNSAPNSPMAMLHISSNP) match the Nuclear export signal motif. At serine 141 the chain carries Phosphoserine; by MTOR. Positions 155 to 164 (EFDDVIDNIM) are strong transcription activation domain. The residue at position 182 (threonine 182) is a Phosphothreonine. Serine 210 carries the phosphoserine; by MTOR modification. Cysteine 211 is subject to S-(2,3-dicarboxypropyl)cysteine. The bHLH domain maps to 234 to 287 (QKKDNHNLIERRRRFNINDRIKELGMLIPKANDLDVRWNKGTILKASVDYIRRM). A Nuclear localization signal motif is present at residues 244 to 247 (RRRR). Residues 297 to 318 (LENHSRRLEMTNKQLWLRIQEL) form a leucine-zipper region. Residue serine 331 is modified to Phosphoserine. The tract at residues 351–429 (SEDGPGEALM…HGSPFPNLSK (79 aa)) is disordered. Low complexity predominate over residues 380–389 (LPSAAQPQSP). Residues serine 422, serine 440, serine 465, serine 466, and serine 468 each carry the phosphoserine modification. Over residues 445–468 (ASDPLFSTMSPEASKASSRRSSFS) the composition is skewed to low complexity. The disordered stretch occupies residues 445 to 475 (ASDPLFSTMSPEASKASSRRSSFSMEEGDVL).

The protein belongs to the MiT/TFE family. As to quaternary structure, homodimer and heterodimer; with TFE3 or MITF. Interacts (when phosphorylated by MTOR) with YWHAZ; promoting retention in the cytosol. Interacts with Irgm1; promoting association between TFEB and PPP3CB and dephosphorylation. Interacts with small GTPases Rag (RagA/RRAGA, RagB/RRAGB, RagC/RRAGC and/or RagD/RRAGD); promoting its recruitment to lysosomal membrane in the presence of nutrients. Interacts with ACSS2. Phosphorylation at Ser-210 by MTOR via non-canonical mTORC1 pathway regulates its subcellular location and activity. When nutrients are present, phosphorylation by MTOR promotes association with 14-3-3/YWHA adapters and retention in the cytosol. Inhibition of mTORC1, starvation and lysosomal disruption, promotes dephosphorylation by calcineurin PPP3CB and translocation to the nucleus. Dephosphorylated by calcineurin PPP3CB in response to lysosomal Ca(2+) release. Irgm1 promotes dephosphorylation by calcineurin PPP3CB, resulting in TFEB nuclear translocation and stimulation of lysosomal biogenesis. Exported from the nucleus in a mTORC1-dependent manner in response to nutrient availability. Post-translationally, alkylated via a non-enzymatic covalent modification. Itaconate, an anti-inflammatory metabolite generated in response to lipopolysaccharide, alkylates Cys-211, preventing association with 14-3-3/YWHA adapters, thereby promoting nuclear translocation and activity. In terms of processing, sumoylated; does not affect dimerization with MITF. As to expression, widely expressed.

It is found in the nucleus. The protein localises to the cytoplasm. The protein resides in the cytosol. Its subcellular location is the lysosome membrane. Its function is as follows. Transcription factor that acts as a master regulator of lysosomal biogenesis, autophagy, lysosomal exocytosis, lipid catabolism, energy metabolism and immune response. Specifically recognizes and binds E-box sequences (5'-CANNTG-3'); efficient DNA-binding requires dimerization with itself or with another MiT/TFE family member such as TFE3 or MITF. Involved in the cellular response to amino acid availability by acting downstream of MTOR: in the presence of nutrients, TFEB phosphorylation by MTOR promotes its cytosolic retention and subsequent inactivation. Upon starvation or lysosomal stress, inhibition of MTOR induces TFEB dephosphorylation, resulting in nuclear localization and transcription factor activity. Specifically recognizes and binds the CLEAR-box sequence (5'-GTCACGTGAC-3') present in the regulatory region of many lysosomal genes, leading to activate their expression, thereby playing a central role in expression of lysosomal genes. Regulates lysosomal positioning in response to nutrient deprivation by promoting the expression of PIP4P1. Acts as a positive regulator of autophagy by promoting expression of genes involved in autophagy. In association with TFE3, activates the expression of CD40L in T-cells, thereby playing a role in T-cell-dependent antibody responses in activated CD4(+) T-cells and thymus-dependent humoral immunity. Specifically recognizes the gamma-E3 box, a subset of E-boxes, present in the heavy-chain immunoglobulin enhancer. Plays a role in the signal transduction processes required for normal vascularization of the placenta. Involved in the immune response to infection by the bacteria S.aureus, S.typhimurium or S.enterica. Infection promotes itaconate production, leading to alkylation, resulting in nuclear localization and transcription factor activity. Itaconate-mediated alkylation activates TFEB-dependent lysosomal biogenesis, facilitating the bacteria clearance during the antibacterial innate immune response. In association with ACSS2, promotes the expression of genes involved in lysosome biogenesis and both autophagy upon glucose deprivation. This Mus musculus (Mouse) protein is Transcription factor EB.